Reading from the N-terminus, the 379-residue chain is Carbamoyl phosphate synthase small chain (379 aa).

A CPSase region spans residues 1 to 188 (MSTPAILALA…ELGKGFTQPE (188 aa)). Residues S47, G240, and G242 each contribute to the L-glutamine site. In terms of domain architecture, Glutamine amidotransferase type-1 spans 192 to 379 (HVVAYDYGVK…FIELIEAAKK (188 aa)). The active-site Nucleophile is C269. L270, Q273, N311, G313, and F314 together coordinate L-glutamine. Catalysis depends on residues H353 and E355.

This sequence belongs to the CarA family. As to quaternary structure, composed of two chains; the small (or glutamine) chain promotes the hydrolysis of glutamine to ammonia, which is used by the large (or ammonia) chain to synthesize carbamoyl phosphate. Tetramer of heterodimers (alpha,beta)4.

The catalysed reaction is hydrogencarbonate + L-glutamine + 2 ATP + H2O = carbamoyl phosphate + L-glutamate + 2 ADP + phosphate + 2 H(+). It catalyses the reaction L-glutamine + H2O = L-glutamate + NH4(+). Its pathway is amino-acid biosynthesis; L-arginine biosynthesis; carbamoyl phosphate from bicarbonate: step 1/1. It participates in pyrimidine metabolism; UMP biosynthesis via de novo pathway; (S)-dihydroorotate from bicarbonate: step 1/3. In terms of biological role, small subunit of the glutamine-dependent carbamoyl phosphate synthetase (CPSase). CPSase catalyzes the formation of carbamoyl phosphate from the ammonia moiety of glutamine, carbonate, and phosphate donated by ATP, constituting the first step of 2 biosynthetic pathways, one leading to arginine and/or urea and the other to pyrimidine nucleotides. The small subunit (glutamine amidotransferase) binds and cleaves glutamine to supply the large subunit with the substrate ammonia. This is Carbamoyl phosphate synthase small chain from Acinetobacter baylyi (strain ATCC 33305 / BD413 / ADP1).